Here is a 743-residue protein sequence, read N- to C-terminus: Zinc transporter ZIP6 (743 aa).

Residues Met1–Pro20 form the signal peptide. Residues Leu21–Trp313 are Extracellular-facing. Residue Asn67 is glycosylated (N-linked (GlcNAc...) asparagine). A compositionally biased stretch (basic and acidic residues) spans His96–His116. Disordered regions lie at residues His96 to Glu174 and Leu190 to Thr245. The segment covering His117 to Ala132 has biased composition (basic residues). Composition is skewed to basic and acidic residues over residues Leu133–Arg147 and His155–Lys167. The segment covering Val206–Thr215 has biased composition (polar residues). A compositionally biased stretch (basic and acidic residues) spans Lys227–Lys237. N-linked (GlcNAc...) asparagine glycans are attached at residues Asn229, Asn254, and Asn271. A helical transmembrane segment spans residues Val314–Val334. The Cytoplasmic portion of the chain corresponds to Pro335–Lys343. A helical membrane pass occupies residues Phe344–His364. Over Leu365–Lys411 the chain is Extracellular. The helical transmembrane segment at Gly412–Ile432 threads the bilayer. Topologically, residues Lys433–Ala645 are cytoplasmic. The stretch at Val452 to Thr474 forms a coiled coil. Phosphoserine occurs at positions 459 and 466. Residues Val646–Ile666 form a helical membrane-spanning segment. Residues Gly667–Ser674 lie on the Extracellular side of the membrane. Asn672 is a glycosylation site (N-linked (GlcNAc...) asparagine). The chain crosses the membrane as a helical span at residues Met675–Pro695. The Cytoplasmic segment spans residues Glu696–Tyr712. Residues Phe713–Phe733 traverse the membrane as a helical segment. The Extracellular segment spans residues Glu734 to Phe743.

It belongs to the ZIP transporter (TC 2.A.5) family. As to quaternary structure, interacts with SLC39A10; which triggers cells to undergo EMT and mitosis. Found in a complex with SLC39A6, SLC39A10 and with the 'Ser-727' phosphorylated form of STAT3 throughout mitosis. Found in a complex with SLC39A6, SLC39A10 and with NCAM1; this complex controls NCAM1 phosphorylation and integration into focal adhesion complexes during epithelial-to-mesenchymal transition (EMT). Found in a complex with SLC39A6, SLC39A10 and with GSK3B that controls NCAM1 phosphorylation. In terms of processing, cleaved on the N-terminus before locating to the plasma membrane. Post-translationally, N-glycosylated. Phosphorylated by ZAP70 in response to TCR stimulation leading to its activation.

It localises to the cell membrane. The protein resides in the cell projection. The protein localises to the lamellipodium membrane. Its subcellular location is the membrane raft. It is found in the apical cell membrane. The enzyme catalyses Zn(2+)(in) = Zn(2+)(out). Its function is as follows. Zinc-influx transporter which plays a role in zinc homeostasis and in the induction of epithelial-to-mesenchymal transition (EMT). When associated with SLC39A10, the heterodimer formed by SLC39A10 and SLC39A6 mediates cellular zinc uptake to trigger cells to undergo epithelial- to-mesenchymal transition (EMT). The SLC39A10-SLC39A6 heterodimer also controls NCAM1 phosphorylation and its integration into focal adhesion complexes during EMT. Zinc influx inactivates GSK3B, enabling unphosphorylated SNAI1 in the nucleus to down-regulate adherence genes such as CDH1, causing loss of cell adherence. In addition, the SLC39A10-SLC39A6 heterodimer plays an essentiel role in initiating mitosis by importing zinc into cells to initiate a pathway resulting in the onset of mitosis. Participates in the T-cell receptor signaling regulation by mediating cellular zinc uptake into activated lymphocytes. Regulates the zinc influx necessary for proper meiotic progression to metaphase II (MII) that allows the oocyte-to-egg transition. This is Zinc transporter ZIP6 from Pongo abelii (Sumatran orangutan).